Consider the following 933-residue polypeptide: Serine/threonine-protein kinase EDR1 (933 aa).

The span at 1 to 10 shows a compositional bias: basic residues; it reads MKHIFKKLHR. Disordered stretches follow at residues 1–74, 342–424, 527–550, and 604–650; these read MKHI…ADYM, CNSN…TAIG, HRDP…AISS, and HGQQ…YRND. Polar residues predominate over residues 37–48; the sequence is NPPQATPSSVTE. Low complexity predominate over residues 53–68; that stretch reads AGATSSMASPAPTAAS. The segment covering 342 to 356 has biased composition (polar residues); sequence CNSNGNKFPTAQFSN. Over residues 367–378 the composition is skewed to low complexity; it reads SSHSSMANYSSS. Basic and acidic residues predominate over residues 379 to 389; it reads LDRRTEAERTD. A compositionally biased stretch (low complexity) spans 404–413; that stretch reads SSPSSVTSST. Over residues 533–550 the composition is skewed to polar residues; that stretch reads GNTQSSYATSSSNGAISS. A compositionally biased stretch (basic and acidic residues) spans 607–621; the sequence is QNDESHIHDHRKYTS. A Protein kinase domain is found at 669–925; sequence LVIAERIGLG…QLTEVLKPLN (257 aa). Residues 675-683 and K696 each bind ATP; that span reads IGLGSYGEV. The Proton acceptor role is filled by D792.

Belongs to the protein kinase superfamily. TKL Ser/Thr protein kinase family. RAF subfamily. In terms of assembly, interacts with KEG. Binds and recruited by EDR4 at the powdery mildew (e.g. G.cichoracearum) penetration site on the plasma membrane. Post-translationally, autophosphorylated.

The protein resides in the cell membrane. It localises to the endosome. Its subcellular location is the nucleus. The protein localises to the endoplasmic reticulum. It is found in the golgi apparatus. The protein resides in the trans-Golgi network. It localises to the early endosome. The enzyme catalyses L-seryl-[protein] + ATP = O-phospho-L-seryl-[protein] + ADP + H(+). The catalysed reaction is L-threonyl-[protein] + ATP = O-phospho-L-threonyl-[protein] + ADP + H(+). MAPKKK serine/threonine-protein kinase involved in the regulation of a MAP kinase cascade (probably including MPK3 and MPK6) that negatively regulates salicylic acid- (SA-) dependent defense responses, abscisic acid (ABA) signaling, and ethylene-induced senescence. Also modulates stress response (e.g. drought) signaling and cell death, in an ORE9-dependent manner. Functions at a point of cross talk between ethylene, ABA and SA signaling that impinges on senescence and cell death. On the other hand, it confers sensitivity to various pathogens such as the fungus E.cichoracearum, the oomycete H.parasitica and the bacteria P.syringae pv. tomato DC3000. Required for resistance to some hemibiotrophic/necrotrophic fungal pathogens (e.g. C.gloeosporioides, C.higginsianum and A.brassicicola) through the induction of defensin expression, probably by repressing MYC2, an inhibitor of defensin genes (PDFs). Together with KEG, may regulate endocytic trafficking and/or the formation of signaling complexes on trans-Golgi network (TGN)/ early endosome (EE) vesicles during stress responses. The chain is Serine/threonine-protein kinase EDR1 (EDR1) from Arabidopsis thaliana (Mouse-ear cress).